Reading from the N-terminus, the 144-residue chain is Large ribosomal subunit protein uL15 (144 aa).

The interval 1–58 (MNLSNLRAPRKANEKKKRVGRGMGSGMGKTSARGHKGQRSRSGSRMMRGFEGGQMPLH) is disordered. Over residues 8–20 (APRKANEKKKRVG) the composition is skewed to basic residues. A compositionally biased stretch (low complexity) spans 40–49 (SRSGSRMMRG).

This sequence belongs to the universal ribosomal protein uL15 family. As to quaternary structure, part of the 50S ribosomal subunit.

In terms of biological role, binds to the 23S rRNA. This Koribacter versatilis (strain Ellin345) protein is Large ribosomal subunit protein uL15.